We begin with the raw amino-acid sequence, 470 residues long: 6-phospho-beta-galactosidase (470 aa).

Gln-19, His-116, Asn-159, Glu-160, and Asn-297 together coordinate D-galactose 6-phosphate. Glu-160 acts as the Proton donor in catalysis. The active-site Nucleophile is Glu-375. D-galactose 6-phosphate contacts are provided by Ser-430, Trp-431, Lys-437, and Tyr-439.

The protein belongs to the glycosyl hydrolase 1 family.

The enzyme catalyses a 6-phospho-beta-D-galactoside + H2O = D-galactose 6-phosphate + an alcohol. Its pathway is carbohydrate metabolism; lactose degradation; D-galactose 6-phosphate and beta-D-glucose from lactose 6-phosphate: step 1/1. The protein is 6-phospho-beta-galactosidase of Staphylococcus aureus (strain USA300).